We begin with the raw amino-acid sequence, 442 residues long: tRNA modification GTPase MnmE (442 aa).

Residues Arg27, Glu84, and Lys124 each contribute to the (6S)-5-formyl-5,6,7,8-tetrahydrofolate site. The TrmE-type G domain occupies 221 to 366 (GLHVVIVGAP…LLDALQAFAE (146 aa)). Residues 231-236 (NAGKSS), 250-256 (SEEAGTT), and 275-278 (DTAG) contribute to the GTP site. 2 residues coordinate Mg(2+): Ser235 and Thr256. Position 442 (Lys442) interacts with (6S)-5-formyl-5,6,7,8-tetrahydrofolate.

Belongs to the TRAFAC class TrmE-Era-EngA-EngB-Septin-like GTPase superfamily. TrmE GTPase family. As to quaternary structure, homodimer. Heterotetramer of two MnmE and two MnmG subunits. K(+) serves as cofactor.

It is found in the cytoplasm. Its function is as follows. Exhibits a very high intrinsic GTPase hydrolysis rate. Involved in the addition of a carboxymethylaminomethyl (cmnm) group at the wobble position (U34) of certain tRNAs, forming tRNA-cmnm(5)s(2)U34. The chain is tRNA modification GTPase MnmE from Brucella melitensis biotype 1 (strain ATCC 23456 / CCUG 17765 / NCTC 10094 / 16M).